Consider the following 545-residue polypeptide: Cytosolic Fe-S cluster assembly factor NAR1 (545 aa).

[4Fe-4S] cluster-binding residues include cysteine 20, cysteine 72, cysteine 75, cysteine 78, cysteine 186, and cysteine 241. Positions proline 401–aspartate 438 are disordered. A compositionally biased stretch (polar residues) spans threonine 426 to aspartate 438. [4Fe-4S] cluster-binding residues include cysteine 453 and cysteine 457.

The protein belongs to the NARF family.

In terms of biological role, component of the cytosolic Fe/S protein assembly machinery. Required for maturation of extramitochondrial Fe/S proteins. May play a role in the transfer of pre-assembled Fe/S clusters to target apoproteins. In Debaryomyces hansenii (strain ATCC 36239 / CBS 767 / BCRC 21394 / JCM 1990 / NBRC 0083 / IGC 2968) (Yeast), this protein is Cytosolic Fe-S cluster assembly factor NAR1 (NAR1).